The sequence spans 47 residues: Small, acid-soluble spore protein K (47 aa).

Residues Met1–Gln47 form a disordered region. Residues Ile12 to Lys22 show a composition bias toward basic and acidic residues.

It belongs to the SspK family.

It is found in the spore core. This is Small, acid-soluble spore protein K from Halalkalibacterium halodurans (strain ATCC BAA-125 / DSM 18197 / FERM 7344 / JCM 9153 / C-125) (Bacillus halodurans).